Consider the following 1336-residue polypeptide: Coiled-coil and C2 domain-containing protein 2A (1336 aa).

Disordered regions lie at residues 1 to 29 and 70 to 97; these read MEAALSRKTAKKKRKTHTTRGYRKREQEV and VEDCQESDEDSGGELAEEPTDSPSQTFI. Residues 8-23 are compositionally biased toward basic residues; sequence KTAKKKRKTHTTRGYR. Residues 70–89 show a composition bias toward acidic residues; it reads VEDCQESDEDSGGELAEEPT. Residues 136 to 156 adopt a coiled-coil conformation; sequence LSDLSELKDSQIRMLNRYQEQ. The region spanning 755-915 is the C2 domain; that stretch reads PREPSGWSGH…LASRTFEGCI (161 aa).

Probable component of the tectonic-like complex (also named MKS complex), composed of B9d1, B9d2, Cc2d2a, Mks1 and tctn. In terms of tissue distribution, expressed in the antennae of chordotonal neurons and male germ cells (at protein level).

Its subcellular location is the cytoplasm. It localises to the cytoskeleton. It is found in the cilium basal body. The protein resides in the microtubule organizing center. The protein localises to the centrosome. Its subcellular location is the centriole. Probable component of the tectonic-like complex (also named MKS complex), a complex localized at the transition zone of primary cilia. Required for ciliary structure and function. The sequence is that of Coiled-coil and C2 domain-containing protein 2A from Drosophila melanogaster (Fruit fly).